The sequence spans 800 residues: Putative antiporter subunit mnhA2 (800 aa).

Transmembrane regions (helical) follow at residues 1–21 (MSLVYLLIAILVIMAMILLMS), 33–53 (IALVAPVISSIYFLIQIPSVA), 78–98 (GLSLMFSLIISLIGIAVFFYA), 118–138 (LFMFSMIGIVLSDNTILMYIF), 167–187 (FMITVFGGLALLVGFIMLYIM), 207–227 (GLFIPMIFMFLLGAFTKSAQF), 241–261 (TPVSAYLHSATMVKAGIFLLL), 273–293 (YVYIVTFVGLITMLFGSITAL), 300–320 (GILAYSTISQLGMIMAMVGIG), 331–351 (IASIYVFVLFGALFHLMNHAI), 387–407 (LVMTIAALSMAGVPFLNGFLS), 424–444 (FSLISMIAIVFVGVIASVFTF), 472–492 (PWLFSLPSLILMVLVPVIFFV), 527–547 (GFNIPLLLTIIIILLGSVLAI), 595–615 (IIMTLGIFMIIIGYGYIRIGL), 627–647 (GALEIILAIVTVTIGISLIFI), 651–671 (LTMVILNGVIGFVVTLFFIAM), 676–696 (LALTQLVVETITTILFIVSFS), 712–732 (IIKISVSLLMALIVVSLIFIT), and 768–788 (LDTLFEGLVLIITGLGIYTLL).

This sequence belongs to the CPA3 antiporters (TC 2.A.63) subunit A family. In terms of assembly, may form a heterooligomeric complex that consists of seven subunits: mnhA2, mnhB2, mnhC2, mnhD2, mnhE2, mnhF2 and mnhG2.

Its subcellular location is the cell membrane. The protein is Putative antiporter subunit mnhA2 (mnhA2) of Staphylococcus aureus (strain USA300).